The primary structure comprises 1865 residues: MVSDAPNSSWHPAMMPNSIADLRNRREDTVPPSAPEGSVLEDNTTQSNTAGEESGAWFQDDGTGDDWLADTNNAPESEPTPAPASAPDTETPEQTGPAESVEEAVPEESSTTSKHLSTMSFTRTVPHEVNWNDDDDAEWSLPRTDTDPFKFIPETNRTNSFPTVSPLEDRAHGAAQEFDHPISFNPAEDLIREIEEEESREDGTLPGAAAESATQNAQDDTTTQQYLTGGPDAVANDALGARFEEGLPLVSSADQDATQEGQQEAGGDLFAEETVGEEDDFFSNVRSDEATQQDDDFQPTPVQRKSTMDVLNSLDMPSTGTGFVPLEETVEEPEAQESPQDQPKAQEGENLDEKWKEMFGDDDAEEGFLPDESTGPNELDASAFLGSDDEGLLEDSETEQQEQSQPLASPGYVSASGPSAQPVNGQYFPHNQGPAVPTPTNPYLPAVSPVTPAHSYLPAAPVSAAQPPTAAPYAPPSTAPPAPALAQFGYGAPPPTQEKNKAQSFVDKKGGYTSPYDLPMEVVKPKRRAGALPLQNNTSGPNSPSTMPPPPRSASMYSQPSPSTGAPTPGTARPASSHSAQAPSSGRKPSHESFFEDLPMTTKPRPASRPKPKSAAPNLVPAAPPVASSRYSPAPPGAPLTNGPAPAPVSSRYSPAPPAPRQPSGGHERSRAHAPVGHVEGSLAERRSSSSLHDHRLQRVPSLPSTREVEEEEVPTQAQASPGGPAPPHPMSPPVSRYAPSPQGARQTPPHTAPSGQTVLSPPKRVMSSHSPLAPPYDFAPPPRSQTQSPGALYGNRATKPVEPIPRPSSVHDPTSPREAAYPAAPASFAPVAPATTYGRPRVPRYGMNQSIPAVIRSPGEVKIQNIKDIIPFEERLAKFPGPLKGKSKKKETIAWLTAGIESLEQGLPTSFSLHTPFSHDDKRAVERVLLWKILRVFVEHDGVLEGNPTVDKAVRDLLSPGLEGADSTTPYVNGGGNFGLADPASAGLQSDGVSSSTVEQIRRQLLSGDHEKAIWAAADQRLWGHALLLSNALAPNLYKQVAQEFIKKEVNSPGRNNESLAALYGVLSGNHEESVDELVPSHARAGLQLVTTHAASSPSKDAMEGLDKWRETLGLILSNRSTDDGRAINSLGVLLSGYGRAEAAHVCFMFARNHTVFGGLDDPASHFVLVGSDHKKQAEQFAKEIEPLLLSEVYEYGQSLAGGFSVPVTNPHLAAYKLQHAIALAEYGFRDKALQYCDAIATAITSQTKRSPYHHPILENAVEDLMMRLKQAPREDSGSWIPKPTMNKVSDTVWSKFNKFVSGDDDGSGQGPTGEGEPGPFSRVAGGTPTISRSPSASNLETFGAAVPSYGMSSSLPNGPVPASAPATRAASRYAPGAPQATGSNSRPSTSAYAPRSSMERTSSELNRGSFEVPRRSLEMQAGHRGSYSPVRSGSPAAMYTPQSTDFGSPQQSPYQPVSHAQPTPFQAPTSAPQPVGYPGPPANGVAPGQESEAPGQSPEASGYQPPSYGYEPPSFTPYEAPTEEKDGTPEETPNGGSYEAPSYQPYSYEPPSYEPDTQPSNEDAGSDDESKPKPKKKGIMYDDDDDFPTPRPAEKSRAEKDRENDEMFRKAAEEDAQRVEAAKQAKKGWGFTSWFGGGGAKKDAATPDSKGANPNKPIRAKLGEANSFYYDPELKRWVNKNAGPEDTAKKATPPPPKAGAPRSVSASPASPPFSPGPGRGASAPPPMGGAGGPPRSASRPPTSSGSTDTTGLPGSPGSVAGGALGPPPGPVAMLRSVSNTSTASAPPLGGGGSGVGGGGGGGPPPSSRPPTSLSNSSSIDDLLGAAGPRKPGAARKARKGARYVDVMGEVKGWRGGEEWVRLG.

Composition is skewed to polar residues over residues 1–10 and 41–51; these read MVSDAPNSSW and EDNTTQSNTAG. Disordered regions lie at residues 1–166, 193–820, 1301–1339, 1355–1665, and 1681–1842; these read MVSD…TVSP, EIEE…PREA, FVSG…PSAS, SSLP…AKLG, and NKNA…ARKG. Residues 85–99 show a composition bias toward low complexity; the sequence is SAPDTETPEQTGPAE. Positions 114–123 are enriched in polar residues; that stretch reads KHLSTMSFTR. The segment covering 213–225 has biased composition (low complexity); that stretch reads ATQNAQDDTTTQQ. Over residues 252–262 the composition is skewed to polar residues; the sequence is SADQDATQEGQ. Over residues 270-281 the composition is skewed to acidic residues; that stretch reads FAEETVGEEDDF. The span at 344 to 359 shows a compositional bias: basic and acidic residues; the sequence is KAQEGENLDEKWKEMF. Composition is skewed to acidic residues over residues 360-369 and 387-400; these read GDDDAEEGFL and SDDE…ETEQ. Over residues 469-483 the composition is skewed to pro residues; that stretch reads TAAPYAPPSTAPPAP. A compositionally biased stretch (basic and acidic residues) spans 498–510; that stretch reads EKNKAQSFVDKKG. Composition is skewed to low complexity over residues 553–585 and 613–632; these read SASM…APSS and KSAA…SRYS. Residues 683–697 are compositionally biased toward basic and acidic residues; sequence LAERRSSSSLHDHRL. A compositionally biased stretch (pro residues) spans 724–733; it reads GPAPPHPMSP. The segment covering 744 to 760 has biased composition (polar residues); the sequence is GARQTPPHTAPSGQTVL. The segment covering 773 to 784 has biased composition (pro residues); the sequence is LAPPYDFAPPPR. The segment covering 1309–1318 has biased composition (gly residues); the sequence is SGQGPTGEGE. The segment covering 1330-1339 has biased composition (polar residues); the sequence is PTISRSPSAS. The segment covering 1362 to 1377 has biased composition (low complexity); that stretch reads VPASAPATRAASRYAP. Composition is skewed to polar residues over residues 1382 to 1393 and 1442 to 1474; these read ATGSNSRPSTSA and TPQS…TSAP. Residues 1539–1557 show a composition bias toward low complexity; the sequence is SYEAPSYQPYSYEPPSYEP. Positions 1594–1625 are enriched in basic and acidic residues; sequence PAEKSRAEKDRENDEMFRKAAEEDAQRVEAAK. Composition is skewed to low complexity over residues 1701-1710 and 1735-1760; these read GAPRSVSASP and PPRS…SPGS. Residues 1790–1803 show a composition bias toward gly residues; that stretch reads LGGGGSGVGGGGGG. The span at 1811–1833 shows a compositional bias: low complexity; the sequence is PPTSLSNSSSIDDLLGAAGPRKP.

It belongs to the SEC16 family.

It localises to the endoplasmic reticulum membrane. Involved in the initiation of assembly of the COPII coat required for the formation of transport vesicles from the endoplasmic reticulum (ER) and the selection of cargo molecules. Also involved in autophagy. The polypeptide is COPII coat assembly protein SEC16 (SEC16) (Chaetomium globosum (strain ATCC 6205 / CBS 148.51 / DSM 1962 / NBRC 6347 / NRRL 1970) (Soil fungus)).